A 138-amino-acid polypeptide reads, in one-letter code: Small ribosomal subunit protein bS6 (138 aa).

The span at 97 to 121 (TEQSEMLKAEENRSERRERRDRPDN) shows a compositional bias: basic and acidic residues. The interval 97-138 (TEQSEMLKAEENRSERRERRDRPDNTDGSNENDSDSDNNADE) is disordered. Residues 126–138 (NENDSDSDNNADE) show a composition bias toward acidic residues.

This sequence belongs to the bacterial ribosomal protein bS6 family.

Binds together with bS18 to 16S ribosomal RNA. In Stutzerimonas stutzeri (strain A1501) (Pseudomonas stutzeri), this protein is Small ribosomal subunit protein bS6.